The following is a 582-amino-acid chain: MRNFSVFERFSKAFKDHPSLTRILVVSTISGGGLIAYSEANASYGANGGAVVETGTKKKKVVLLGTGWAGTSFLKNLNNSQYEVQIISPRNYFAFTPLLPSVTCGTVEARSVVEPIRNIGRKNVDTSYLEAECFKIDPASKKVYCRSKQGLSSNGKKEFSVDYDYLVIATGAQSNTFNIPGVEENCHFLKEVEDAQRIRKTVIDSFEKASLPELSDEERKRILHFVVVGGGPTGVEFAAELHDFVTEDLVSLYPRAKGSVRITLLEAADHILTMFDKRITEFAEEKFSRDGIDVKLGSMVTKVNEKDISAKTKGGEVSSIPYGMIVWSTGIGTRPVIKDFMKQIGQGNRRALATDEWLRVEGTDNIYALGDCATINQRKVMEDVSAIFSKADKDKSGTLTLKEFQEAMDDICVRYPQVELYLKSKRMRGIADLLKEAETDDVSKNNIELKIEEFKSALSQVDSQVKFLPATAQVAAQQGAYLAKCFDRMEECEKSPEGPIRMRGEGRHRFRPFRYRHLGQFAPLGGEQTAAQLPGDWVSIGHSSQWLWYSVYASKQVSWRTRVLVVSDWMRRFIFGRDSSSI.

A mitochondrion-targeting transit peptide spans 1 to 38 (MRNFSVFERFSKAFKDHPSLTRILVVSTISGGGLIAYS). 60–90 (KVVLLGTGWAGTSFLKNLNNSQYEVQIISPR) lines the FAD pocket. 223-259 (LHFVVVGGGPTGVEFAAELHDFVTEDLVSLYPRAKGS) contacts NAD(+). The region spanning 379–414 (KVMEDVSAIFSKADKDKSGTLTLKEFQEAMDDICVR) is the EF-hand domain. Ca(2+) contacts are provided by D392, D394, S396, T398, and E403. Positions 573–582 (FIFGRDSSSI) match the Microbody targeting signal motif.

It belongs to the NADH dehydrogenase family. The cofactor is FAD. As to expression, mostly expressed in seedlings and roots and, to a lower extent, in cotyledons, leaves, stems, buds and flowers.

The protein resides in the mitochondrion inner membrane. Its subcellular location is the peroxisome. It catalyses the reaction a quinone + NADH + H(+) = a quinol + NAD(+). The enzyme catalyses a ubiquinone + NADH + H(+) = a ubiquinol + NAD(+). Its activity is regulated as follows. NADPH oxidase activity is stimulated by calcium ions. Functionally, alternative NADH-ubiquinone oxidoreductase which catalyzes the oxidation of mitochondrial NADH does not translocate protons across the inner mitochondrial membrane. Calcium-dependent NAD(P)H dehydrogenase; more efficient on NADH. Binds calcium ions. The protein is External alternative NAD(P)H-ubiquinone oxidoreductase B2, mitochondrial (NDB2) of Arabidopsis thaliana (Mouse-ear cress).